Consider the following 98-residue polypeptide: UPF0235 protein MJ0618 (98 aa).

The protein belongs to the UPF0235 family.

The chain is UPF0235 protein MJ0618 from Methanocaldococcus jannaschii (strain ATCC 43067 / DSM 2661 / JAL-1 / JCM 10045 / NBRC 100440) (Methanococcus jannaschii).